A 455-amino-acid chain; its full sequence is Pup--protein ligase (455 aa).

Glu-10 serves as a coordination point for Mg(2+). Arg-55 contacts ATP. A Mg(2+)-binding site is contributed by Tyr-57. The active-site Proton acceptor is Asp-59. Mg(2+) is bound at residue Glu-65. 2 residues coordinate ATP: Thr-68 and Trp-422.

Belongs to the Pup ligase/Pup deamidase family. Pup-conjugating enzyme subfamily.

The catalysed reaction is ATP + [prokaryotic ubiquitin-like protein]-L-glutamate + [protein]-L-lysine = ADP + phosphate + N(6)-([prokaryotic ubiquitin-like protein]-gamma-L-glutamyl)-[protein]-L-lysine.. It participates in protein degradation; proteasomal Pup-dependent pathway. Its pathway is protein modification; protein pupylation. Its function is as follows. Catalyzes the covalent attachment of the prokaryotic ubiquitin-like protein modifier Pup to the proteasomal substrate proteins, thereby targeting them for proteasomal degradation. This tagging system is termed pupylation. The ligation reaction involves the side-chain carboxylate of the C-terminal glutamate of Pup and the side-chain amino group of a substrate lysine. This is Pup--protein ligase from Sanguibacter keddieii (strain ATCC 51767 / DSM 10542 / NCFB 3025 / ST-74).